We begin with the raw amino-acid sequence, 247 residues long: 6-phosphogluconolactonase (247 aa).

It belongs to the glucosamine/galactosamine-6-phosphate isomerase family. 6-phosphogluconolactonase subfamily.

It carries out the reaction 6-phospho-D-glucono-1,5-lactone + H2O = 6-phospho-D-gluconate + H(+). Its pathway is carbohydrate degradation; pentose phosphate pathway; D-ribulose 5-phosphate from D-glucose 6-phosphate (oxidative stage): step 2/3. Functionally, hydrolysis of 6-phosphogluconolactone to 6-phosphogluconate. This chain is 6-phosphogluconolactonase (pgl), found in Mycobacterium leprae (strain TN).